Reading from the N-terminus, the 160-residue chain is D-aminoacyl-tRNA deacylase (160 aa).

The Gly-cisPro motif, important for rejection of L-amino acids signature appears at 137–138 (GP).

It belongs to the DTD family. Homodimer.

The protein localises to the cytoplasm. It catalyses the reaction glycyl-tRNA(Ala) + H2O = tRNA(Ala) + glycine + H(+). It carries out the reaction a D-aminoacyl-tRNA + H2O = a tRNA + a D-alpha-amino acid + H(+). Its function is as follows. An aminoacyl-tRNA editing enzyme that deacylates mischarged D-aminoacyl-tRNAs. Also deacylates mischarged glycyl-tRNA(Ala), protecting cells against glycine mischarging by AlaRS. Acts via tRNA-based rather than protein-based catalysis; rejects L-amino acids rather than detecting D-amino acids in the active site. By recycling D-aminoacyl-tRNA to D-amino acids and free tRNA molecules, this enzyme counteracts the toxicity associated with the formation of D-aminoacyl-tRNA entities in vivo and helps enforce protein L-homochirality. The protein is D-aminoacyl-tRNA deacylase of Chloroflexus aurantiacus (strain ATCC 29364 / DSM 637 / Y-400-fl).